Consider the following 205-residue polypeptide: MFLTNGSRAGPVKERGLLIIDADHPNYDASGRGKRRRVEQEHHSDLNNETAAPTGGSAGEEIVLPFTKTLASWKEFESDEVYKRTPQRPHFPSLAYTHPSFGEPTAAYLTAAFIDCVKTVDGMCEDTPKSELDVYRETFKMFEEQGFDVAEPLSQVLTLLVLRKMRRESLRQQKGMEKEMADDYSKLKKSLVRCKSSFEDKETAK.

Residues 28-59 (DASGRGKRRRVEQEHHSDLNNETAAPTGGSAG) form a disordered region. Residues 63–189 (VLPFTKTLAS…MADDYSKLKK (127 aa)) enclose the DUF724 domain.

Expressed in roots, leaves, stems, flowers and siliques.

The protein resides in the nucleus. In terms of biological role, may be involved in the polar growth of plant cells via transportation of RNAs. This Arabidopsis thaliana (Mouse-ear cress) protein is DUF724 domain-containing protein 4.